The primary structure comprises 191 residues: Holliday junction branch migration complex subunit RuvA (191 aa).

The segment at 1–64 is domain I; sequence MIGRITGTLA…EDAHLLYGFG (64 aa). The interval 65–138 is domain II; the sequence is SEVERAAFRE…KGKPVFAGAL (74 aa). The flexible linker stretch occupies residues 138–141; the sequence is LASV. Residues 142-191 are domain III; sequence PSAGASDDVRQALLALGYNERETAATVRELPAGLAVGEAIRQALRALSRA.

It belongs to the RuvA family. As to quaternary structure, homotetramer. Forms an RuvA(8)-RuvB(12)-Holliday junction (HJ) complex. HJ DNA is sandwiched between 2 RuvA tetramers; dsDNA enters through RuvA and exits via RuvB. An RuvB hexamer assembles on each DNA strand where it exits the tetramer. Each RuvB hexamer is contacted by two RuvA subunits (via domain III) on 2 adjacent RuvB subunits; this complex drives branch migration. In the full resolvosome a probable DNA-RuvA(4)-RuvB(12)-RuvC(2) complex forms which resolves the HJ.

It localises to the cytoplasm. In terms of biological role, the RuvA-RuvB-RuvC complex processes Holliday junction (HJ) DNA during genetic recombination and DNA repair, while the RuvA-RuvB complex plays an important role in the rescue of blocked DNA replication forks via replication fork reversal (RFR). RuvA specifically binds to HJ cruciform DNA, conferring on it an open structure. The RuvB hexamer acts as an ATP-dependent pump, pulling dsDNA into and through the RuvAB complex. HJ branch migration allows RuvC to scan DNA until it finds its consensus sequence, where it cleaves and resolves the cruciform DNA. This Thiobacillus denitrificans (strain ATCC 25259 / T1) protein is Holliday junction branch migration complex subunit RuvA.